A 319-amino-acid polypeptide reads, in one-letter code: 4-diphosphocytidyl-2-C-methyl-D-erythritol kinase (319 aa).

The active site involves Lys-18. 103–113 serves as a coordination point for ATP; the sequence is PIGAGLAGGST. Residue Asp-145 is part of the active site.

It belongs to the GHMP kinase family. IspE subfamily.

It carries out the reaction 4-CDP-2-C-methyl-D-erythritol + ATP = 4-CDP-2-C-methyl-D-erythritol 2-phosphate + ADP + H(+). Its pathway is isoprenoid biosynthesis; isopentenyl diphosphate biosynthesis via DXP pathway; isopentenyl diphosphate from 1-deoxy-D-xylulose 5-phosphate: step 3/6. In terms of biological role, catalyzes the phosphorylation of the position 2 hydroxy group of 4-diphosphocytidyl-2C-methyl-D-erythritol. The protein is 4-diphosphocytidyl-2-C-methyl-D-erythritol kinase of Prochlorococcus marinus (strain NATL1A).